Consider the following 507-residue polypeptide: ATP synthase subunit alpha, chloroplastic (507 aa).

Residue 170 to 177 participates in ATP binding; it reads GDRQTGKT.

Belongs to the ATPase alpha/beta chains family. F-type ATPases have 2 components, CF(1) - the catalytic core - and CF(0) - the membrane proton channel. CF(1) has five subunits: alpha(3), beta(3), gamma(1), delta(1), epsilon(1). CF(0) has four main subunits: a, b, b' and c.

Its subcellular location is the plastid. The protein localises to the chloroplast thylakoid membrane. It catalyses the reaction ATP + H2O + 4 H(+)(in) = ADP + phosphate + 5 H(+)(out). Functionally, produces ATP from ADP in the presence of a proton gradient across the membrane. The alpha chain is a regulatory subunit. The chain is ATP synthase subunit alpha, chloroplastic from Drimys granadensis.